Reading from the N-terminus, the 318-residue chain is Olfactory receptor 2A2 (318 aa).

The Extracellular portion of the chain corresponds to 1-24 (MEGNQTWITDITLLGFQVGPALAI). N-linked (GlcNAc...) asparagine glycosylation occurs at Asn-4. A helical membrane pass occupies residues 25–48 (LLCGLFSVFYTLTLLGNGVIFGII). At 49–56 (CLDSKLHT) the chain is on the cytoplasmic side. The chain crosses the membrane as a helical span at residues 57–78 (PMYFFLSHLAIIDMSYASNNVP). Residues 79–99 (KMLANLMNQKRTISFVPCIMQ) are Extracellular-facing. The chain crosses the membrane as a helical span at residues 100-119 (TFLYLAFAVTECLILVVMSY). Residues 120–138 (DRYVAICHPFQYTVIMSWR) are Cytoplasmic-facing. The helical transmembrane segment at 139-157 (VCTILVLTSWSCGFALSLV) threads the bilayer. Over 158-194 (HEILLLRLPFCGPRDVNHLFCEILSVLKLACADTWVN) the chain is Extracellular. The helical transmembrane segment at 195–218 (QVVIFATCVFVLVGPLSLILVSYM) threads the bilayer. Topologically, residues 219–235 (HILGAILKIQTKEGRIK) are cytoplasmic. Residues 236–258 (AFSTCSSHLCVVGLFFGIAMVVY) form a helical membrane-spanning segment. Residues 259–271 (MVPDSNQREEQEK) lie on the Extracellular side of the membrane. The chain crosses the membrane as a helical span at residues 272–291 (MLSLFHSVFNPMLNPLIYSL). The Cytoplasmic portion of the chain corresponds to 292–310 (RNAQLKGALHRALQRKRSM).

It belongs to the G-protein coupled receptor 1 family.

The protein resides in the cell membrane. Its function is as follows. Odorant receptor. This is Olfactory receptor 2A2 (OR2A2) from Homo sapiens (Human).